We begin with the raw amino-acid sequence, 146 residues long: Hemoglobin subunit beta (146 aa).

One can recognise a Globin domain in the interval 2-146; sequence HWTAEEKQLI…VAHALARKYH (145 aa). Heme b contacts are provided by His63 and His92.

It belongs to the globin family. Heterotetramer of two alpha chains and two beta chains. Red blood cells.

In terms of biological role, involved in oxygen transport from the lung to the various peripheral tissues. The sequence is that of Hemoglobin subunit beta (HBB) from Aquila chrysaetos (Golden eagle).